A 279-amino-acid polypeptide reads, in one-letter code: MIQAETSAADSAVFAGNRAQGAVRFDVRAVDGVTRRGQLHESGSLRVRFPSPEQQGLSAVLVNTAGGIAGGDRFGVDIAVGESARLTLTTAAAEKIYRSHGPAAQLDIALQVAEGGHLAWLPQETILFDQARVERRIDIDLAAGASLLLCESVIFGRSAMGETMRSGRFTDRWRLRIGGKLVFAETVRLDGDIGALLGRPAVAKGGVAIGTALIAPGDAALVARLREDADGFGAEVGITAWNGIAMARFCAQDAAKLRADMMAVLRRAAGRALPRLWLG.

It belongs to the UreD family. UreD, UreF and UreG form a complex that acts as a GTP-hydrolysis-dependent molecular chaperone, activating the urease apoprotein by helping to assemble the nickel containing metallocenter of UreC. The UreE protein probably delivers the nickel.

Its subcellular location is the cytoplasm. In terms of biological role, required for maturation of urease via the functional incorporation of the urease nickel metallocenter. The protein is Urease accessory protein UreD of Rhodopseudomonas palustris (strain HaA2).